The chain runs to 451 residues: MVQTPSEINTHLKHLLACDAYKLSHRLMYPNDTTNLYSCLTARGGRGGFPNFVWNHEFAKKIILEVFGNFCDSVLAVQNDPGLAQALTDKVTTVFGDPQFGLEFTQHICYLANFLKQHHQLPLTVKIHQSSEGLAFRTPLVTITGSDQMVPELVWLVNYFETVLLENIWLYQTTLTVAQSLKLLLERYANETADNTEFTHFQCHDFSMRGMSSLQSALYVANAHLQYFSGSDTILGGVAAKSILASEHSVMCADGQEGELNTFKRLLEQFPNKNLSLVIDSYDMWHVLDNILPQLKDLVLQRQEKLYLRPDSGNFETLICQGKRFNPEDKTTWGVIDYLDYHFGSTVNQKGYKVLNQKLGIVYGDGITYERIEYILEQLKQRGFCSSNIVFGVGSTTYQNLNRDTLGFVYKLTAIKKGNTWHDVTKSPITDPTKQSIGGRFDNPNLIQVYG.

Arg-209 lines the diphosphate pocket. Asp-232 serves as a coordination point for beta-nicotinamide D-ribonucleotide. Diphosphate contacts are provided by His-248 and Arg-309. Beta-nicotinamide D-ribonucleotide is bound by residues 309-311 (RPD), 364-365 (GD), and Arg-403.

The protein belongs to the NAPRTase family.

The catalysed reaction is beta-nicotinamide D-ribonucleotide + diphosphate = 5-phospho-alpha-D-ribose 1-diphosphate + nicotinamide + H(+). It participates in cofactor biosynthesis; NAD(+) biosynthesis; nicotinamide D-ribonucleotide from 5-phospho-alpha-D-ribose 1-diphosphate and nicotinamide: step 1/1. Functionally, catalyzes the condensation of nicotinamide with 5-phosphoribosyl-1-pyrophosphate to yield nicotinamide mononucleotide, an intermediate in the biosynthesis of NAD. The sequence is that of Nicotinamide phosphoribosyltransferase from Mycoplasma pneumoniae (strain ATCC 29342 / M129 / Subtype 1) (Mycoplasmoides pneumoniae).